The chain runs to 631 residues: Forkhead box protein O1 (631 aa).

Over residues 1 to 11 (MAEAPQPPPPL) the composition is skewed to pro residues. 4 disordered regions span residues 1 to 57 (MAEA…PAAG), 90 to 147 (DIRQ…SRRN), 223 to 324 (SSWW…MPEQ), and 372 to 404 (PNSSTQSSPASMMQQSGYLFTSPNTSLGSPNSE). 2 stretches are compositionally biased toward low complexity: residues 37–48 (NPSSSANSSPAP) and 100–135 (QQQQQHSQQQQEALTLLAPSVPSALSPASSPSPLGA). The fork-head DNA-binding region spans 149–243 (WGNLSYADLI…KNGKSPRRRA (95 aa)). Positions 253-264 (AKSRGRAAKKKA) are enriched in basic residues. Residues 265–282 (SMQSSQDGSSDSPGSQFS) are compositionally biased toward low complexity. Polar residues-rich tracts occupy residues 303-315 (RPRTSSNASTISG) and 381-403 (ASMMQQSGYLFTSPNTSLGSPNS).

In terms of processing, phosphorylated by AKT1; insulin-induced. Post-translationally, IGF1 rapidly induces phosphorylation of Thr-28, Ser-245 and Ser-308. Phosphorylation of Ser-245 decreases DNA-binding activity and promotes the phosphorylation of Thr-28, and Ser-308, which leads to nuclear exclusion and loss of function. Phosphorylation of Ser-318 is independent of IGF1 and leads to reduced function. In terms of tissue distribution, localized to the animal hemisphere during early cleavage stages. At early tadpole stages, expressed in the branchial arches, pronephros and liver. Within the head, expressed in the forming thyroid gland and in head mesenchyme anterior to the eyes.

The protein localises to the cytoplasm. It localises to the nucleus. Functionally, transcription factor that regulates metabolic homeostasis in response to oxidative stress. Binds to the consensus sequence 5'-TT[G/A]TTTTG-3' and the related Daf-16 family binding element (DBE) with consensus sequence 5'-TT[G/A]TTTAC-3'. Main regulator of redox balance and osteoblast numbers and controls bone mass. Orchestrates the endocrine function of the skeleton in regulating glucose metabolism. Also acts as a key regulator of chondrogenic commitment of skeletal progenitor cells in response to lipid availability: when lipids levels are low, translocates to the nucleus and promotes expression of sox9, which induces chondrogenic commitment and suppresses fatty acid oxidation. Acts synergistically with atf4 to suppress osteocalcin/bglap activity, increasing glucose levels and triggering glucose intolerance and insulin insensitivity. Also suppresses the transcriptional activity of runx2, an upstream activator of osteocalcin/bglap. May act as a positive regulator of apoptosis in cardiac smooth muscle cells as a result of its transcriptional activation of pro-apoptotic genes. In Xenopus laevis (African clawed frog), this protein is Forkhead box protein O1.